The primary structure comprises 512 residues: MKRCYITTPIYYASGKPHIGHAFTTILADVIKRFKIQNGYEAFLLVGSDEHGNKIESKAKSLNLDPKTFVDINAQAFKLMWKTLNISFDHFIRTTDEIHKQQVQKTFQDLYDKKLIYQSEWKGAYCVECEQNYFTFNKQTMLCEIGHNLSLVQEPCWFISFSSTKNWIETTIGKNQLNIIPKSRASELKNNFINNGLNDLALTRKNVTWGIKVPFDPNQTIYVWFDALFSYITNLGFRNGDPNFIKWWNNDNKEREVIHLISREITRFHCIYWPIFLHLLDIKLPTQFLSHGWIVDGEGRKMSKSLNNVISPEQLIDQFGVDGTRYCLLKEMRLDKDNRCSVSILKEIYNADLANSFGNHVSRTFGMIKKYLNGKLEYQIITDNALQKIMILIDESIVQFDHYFNSYEFYRAINLLLKIVFELSKLIDDFKPWELFKNQEFSLLKQLLFTCVRCVQVCYVLLTPILVNTASKVFHLFNFADDACRKDQLRDATLLKKIIISNSMEVLFKRVD.

The short motif at 11–21 is the 'HIGH' region element; it reads YYASGKPHIGH. Positions 126, 129, 143, and 147 each coordinate Zn(2+). Positions 301–305 match the 'KMSKS' region motif; it reads KMSKS. Lys-304 is an ATP binding site.

This sequence belongs to the class-I aminoacyl-tRNA synthetase family. MetG type 2A subfamily. In terms of assembly, monomer. Zn(2+) is required as a cofactor.

It localises to the cytoplasm. It catalyses the reaction tRNA(Met) + L-methionine + ATP = L-methionyl-tRNA(Met) + AMP + diphosphate. Is required not only for elongation of protein synthesis but also for the initiation of all mRNA translation through initiator tRNA(fMet) aminoacylation. The sequence is that of Methionine--tRNA ligase (metG) from Mycoplasma genitalium (strain ATCC 33530 / DSM 19775 / NCTC 10195 / G37) (Mycoplasmoides genitalium).